A 391-amino-acid polypeptide reads, in one-letter code: NADH-quinone oxidoreductase subunit D (391 aa).

It belongs to the complex I 49 kDa subunit family. As to quaternary structure, NDH-1 is composed of 14 different subunits. Subunits NuoB, C, D, E, F, and G constitute the peripheral sector of the complex.

The protein resides in the cell inner membrane. It catalyses the reaction a quinone + NADH + 5 H(+)(in) = a quinol + NAD(+) + 4 H(+)(out). NDH-1 shuttles electrons from NADH, via FMN and iron-sulfur (Fe-S) centers, to quinones in the respiratory chain. The immediate electron acceptor for the enzyme in this species is believed to be ubiquinone. Couples the redox reaction to proton translocation (for every two electrons transferred, four hydrogen ions are translocated across the cytoplasmic membrane), and thus conserves the redox energy in a proton gradient. The protein is NADH-quinone oxidoreductase subunit D of Rickettsia canadensis (strain McKiel).